The following is a 244-amino-acid chain: 5-oxoprolinase subunit A (244 aa).

Belongs to the LamB/PxpA family. In terms of assembly, forms a complex composed of PxpA, PxpB and PxpC.

It catalyses the reaction 5-oxo-L-proline + ATP + 2 H2O = L-glutamate + ADP + phosphate + H(+). In terms of biological role, catalyzes the cleavage of 5-oxoproline to form L-glutamate coupled to the hydrolysis of ATP to ADP and inorganic phosphate. The sequence is that of 5-oxoprolinase subunit A from Salmonella typhi.